We begin with the raw amino-acid sequence, 759 residues long: Protein MEI2-like 3 (759 aa).

2 consecutive RRM domains span residues 166 to 239 (RTLF…FSIP) and 251 to 324 (GTLV…HSRP).

In terms of biological role, probable RNA-binding protein that plays a role in meiosis and vegetative growth. This is Protein MEI2-like 3 (ML3) from Arabidopsis thaliana (Mouse-ear cress).